A 249-amino-acid polypeptide reads, in one-letter code: uncharacterized protein (249 aa).

This sequence belongs to the ycf73 family.

It localises to the plastid. The protein localises to the chloroplast. This is an uncharacterized protein from Oryza sativa (Rice).